Reading from the N-terminus, the 434-residue chain is D-amino acid dehydrogenase (434 aa).

FAD is bound at residue 3–17; sequence VIVLGSGVIGTTTAY.

This sequence belongs to the DadA oxidoreductase family. FAD is required as a cofactor.

It catalyses the reaction a D-alpha-amino acid + A + H2O = a 2-oxocarboxylate + AH2 + NH4(+). Its function is as follows. Oxidative deamination of D-amino acids. In Bordetella bronchiseptica (strain ATCC BAA-588 / NCTC 13252 / RB50) (Alcaligenes bronchisepticus), this protein is D-amino acid dehydrogenase.